Consider the following 120-residue polypeptide: Large ribosomal subunit protein bL20 (120 aa).

It belongs to the bacterial ribosomal protein bL20 family.

Functionally, binds directly to 23S ribosomal RNA and is necessary for the in vitro assembly process of the 50S ribosomal subunit. It is not involved in the protein synthesizing functions of that subunit. The chain is Large ribosomal subunit protein bL20 from Cereibacter sphaeroides (strain ATCC 17029 / ATH 2.4.9) (Rhodobacter sphaeroides).